A 305-amino-acid polypeptide reads, in one-letter code: Ornithine carbamoyltransferase, catabolic (305 aa).

Residues 50 to 53 (STRT), glutamine 77, arginine 101, and 128 to 131 (HPLQ) each bind carbamoyl phosphate. Residues asparagine 159, aspartate 223, and 227 to 228 (SM) contribute to the L-ornithine site. Carbamoyl phosphate contacts are provided by residues 263-264 (CL) and arginine 291.

The protein belongs to the aspartate/ornithine carbamoyltransferase superfamily. OTCase family.

Its subcellular location is the cytoplasm. The catalysed reaction is carbamoyl phosphate + L-ornithine = L-citrulline + phosphate + H(+). It functions in the pathway amino-acid degradation; L-arginine degradation via ADI pathway; carbamoyl phosphate from L-arginine: step 2/2. Reversibly catalyzes the transfer of the carbamoyl group from carbamoyl phosphate (CP) to the N(epsilon) atom of ornithine (ORN) to produce L-citrulline. The protein is Ornithine carbamoyltransferase, catabolic of Thermoplasma acidophilum (strain ATCC 25905 / DSM 1728 / JCM 9062 / NBRC 15155 / AMRC-C165).